The sequence spans 513 residues: Zinc finger protein 395 (513 aa).

Positions 17–29 are enriched in low complexity; sequence ARVLGPSASEGPS. The disordered stretch occupies residues 17–56; sequence ARVLGPSASEGPSAAPPSEPLLEGAAPQPFTTSDDTPCQE. A compositionally biased stretch (polar residues) spans 45–55; that stretch reads PFTTSDDTPCQ. Residues 165-174 carry the Nuclear export signal motif; that stretch reads MDEMMAAMVL. The interval 204-269 is disordered; sequence KESGDISDSG…DPFLLDEPAP (66 aa). The span at 209-229 shows a compositional bias: low complexity; it reads ISDSGSSTTSGHWSGSSGVST. Serine 248 is subject to Phosphoserine. Residues 280-305 form a C2H2-type zinc finger; the sequence is YKCLWPNCGKVLRSIVGIKRHVKALH. The interval 335–394 is disordered; the sequence is AAAAAAAGTPVPGTPTSEPAPTPSMTGLPLSALPPPLHKAQSSGPEHPGPESSLPSGALS. Polar residues predominate over residues 348–359; that stretch reads TPTSEPAPTPSM. Phosphoserine occurs at positions 376 and 449. The span at 376-391 shows a compositional bias: low complexity; sequence SSGPEHPGPESSLPSG.

As to quaternary structure, interacts with repression-mediating E2 binding site P2 of human papillomavirus type 8 (HPV8). Widely expressed.

The protein localises to the cytoplasm. It is found in the nucleus. Its function is as follows. Plays a role in papillomavirus genes transcription. The sequence is that of Zinc finger protein 395 (ZNF395) from Homo sapiens (Human).